A 138-amino-acid chain; its full sequence is Cysteine desulfuration protein SufE (138 aa).

Cys-51 functions as the Cysteine persulfide intermediate in the catalytic mechanism.

The protein belongs to the SufE family. In terms of assembly, homodimer. Interacts with SufS.

It is found in the cytoplasm. Its pathway is cofactor biosynthesis; iron-sulfur cluster biosynthesis. Participates in cysteine desulfuration mediated by SufS. Cysteine desulfuration mobilizes sulfur from L-cysteine to yield L-alanine and constitutes an essential step in sulfur metabolism for biosynthesis of a variety of sulfur-containing biomolecules. Functions as a sulfur acceptor for SufS, by mediating the direct transfer of the sulfur atom from the S-sulfanylcysteine of SufS, an intermediate product of cysteine desulfuration process. This chain is Cysteine desulfuration protein SufE, found in Salmonella arizonae (strain ATCC BAA-731 / CDC346-86 / RSK2980).